We begin with the raw amino-acid sequence, 619 residues long: Cationic amino acid transporter 3 (619 aa).

Residues 1 to 36 are Cytoplasmic-facing; the sequence is MLWQALRRFGQKLVRRRLLELGMGETRLARCLSTLD. The chain crosses the membrane as a helical span at residues 37–57; the sequence is LVALGVGSTLGAGVYVLAGEV. Topologically, residues 58–61 are extracellular; sequence AKEK. A helical transmembrane segment spans residues 62 to 82; sequence AGPSIVICFLVAALSSVLAGL. The Cytoplasmic portion of the chain corresponds to 83 to 107; sequence CYAEFGARVPGSGSAYLYSYVTVGE. The helical transmembrane segment at 108 to 128 threads the bilayer; that stretch reads LWAFTTGWNLILSYVIGTASV. The Extracellular segment spans residues 129–162; that stretch reads ARAWSSAFDNLIGNHISQTLKGTILLNMPHVLAE. Residues 163 to 183 traverse the membrane as a helical segment; that stretch reads YPDFFALALVLLLTGLLVLGA. Over 184–191 the chain is Cytoplasmic; that stretch reads NESGLVTK. The chain crosses the membrane as a helical span at residues 192 to 212; it reads VFTGMNLLVLGFVIISGFIKG. Residues 213–244 are Extracellular-facing; the sequence is ELRNWKLTKEDYCLTMSESNGTCSLDSMGSGG. N-linked (GlcNAc...) asparagine glycosylation occurs at Asn232. A helical transmembrane segment spans residues 245–265; sequence FMPFGLEGILRGAATCFYAFV. Over 266–285 the chain is Cytoplasmic; it reads GFDCIATTGEEAQNPQRSIP. Residues 286 to 306 form a helical membrane-spanning segment; that stretch reads MGIVISLSICFLAYFGVSSAL. The Extracellular segment spans residues 307–335; that stretch reads TLMMPYYKLQPESPLPEAFTYVGWEPARY. The chain crosses the membrane as a helical span at residues 336-356; the sequence is LVAIGSLCALSTSLLGSMFPM. Over 357-382 the chain is Cytoplasmic; that stretch reads PRVIYAMAEDGLLFRVLARVHNGTHT. Residues 383–403 form a helical membrane-spanning segment; that stretch reads PIVATVVSGVIAAFMAFLFEL. Topologically, residues 404–406 are extracellular; that stretch reads TDL. A helical transmembrane segment spans residues 407-427; sequence VDLMSIGTLLAYSLVSICVLI. At 428–475 the chain is on the cytoplasmic side; it reads LRYQPDQEMKNGEEEVELQEERTLEAEKLTVQALFCQVDSIPTLLSGR. A helical transmembrane segment spans residues 476–496; it reads IVYVCSSLLAVLLTVLCLVLT. At 497–507 the chain is on the extracellular side; the sequence is WWTTPLHSGDP. Residues 508-528 traverse the membrane as a helical segment; sequence VWVTVVVLILGLILGISGVIW. At 529 to 540 the chain is on the cytoplasmic side; it reads RQPQNRTPLHFK. Residues 541 to 561 traverse the membrane as a helical segment; sequence VPVVPLLPLVSIFVNVYLMMQ. The Extracellular portion of the chain corresponds to 562–569; it reads MTADTWAR. The chain crosses the membrane as a helical span at residues 570–590; that stretch reads FGVWMLIGFAIYFGYGIQHSV. Topologically, residues 591–619 are cytoplasmic; that stretch reads EEVKNHQTLPKTRPQTIDLDLTTSCVHSI. Thr606 carries the phosphothreonine modification. Ser618 carries the post-translational modification Phosphoserine.

This sequence belongs to the amino acid-polyamine-organocation (APC) superfamily. Cationic amino acid transporter (CAT) (TC 2.A.3.3) family. Post-translationally, N-glycosylated. Highly expressed in brain.

The protein localises to the cell membrane. It catalyses the reaction L-arginine(in) = L-arginine(out). The catalysed reaction is L-lysine(in) = L-lysine(out). It carries out the reaction L-ornithine(in) = L-ornithine(out). Its activity is regulated as follows. Inhibited by high potassium ions-induced membrane depolarization. Functionally, uniporter that mediates the uptake of cationic L-amino acids such as L-arginine, L-lysine and L-ornithine. The transport is sodium ions- and pH-independent, moderately trans-stimulated and is mediated by passive diffusion. The polypeptide is Cationic amino acid transporter 3 (Rattus norvegicus (Rat)).